A 491-amino-acid chain; its full sequence is Nucleoside transporter 1.2 (491 aa).

6 helical membrane-spanning segments follow: residues 27–47 (FYVYVVAFMCGVSMMMSVNAV), 82–102 (YNLIGIVTSLIMEPLTLLSWF), 109–129 (VRLLGGLVILIVEIIVLMVVP), 136–156 (AGAVATICCTGFIGGFGKSIF), 173–193 (STMMGGVGMSGVLTSLLQIIV), and 209–229 (KIYYGLDVGIQGMTFVALILL). Over residues 261–273 (HTDEHPTHDKEGR) the composition is skewed to basic and acidic residues. Disordered regions lie at residues 261–280 (HTDEHPTHDKEGRNSSSGKE) and 290–309 (AAAKSEGPDAVEESSWPHEV). An N-linked (GlcNAc...) asparagine glycan is attached at N274. 5 consecutive transmembrane segments (helical) span residues 333–353 (MFVACAFNFLITLFLFPGIAV), 361–381 (WFSTIAVFIFNVFDVLGRFSP), 395–415 (WIIVAASFARVIFVPLLLLHS), 427–447 (VMEVIFGFSNGYVGSMALVLG), and 460–480 (FVAGTLMGISILVGGTIGTVL).

The protein belongs to the SLC29A/ENT transporter (TC 2.A.57) family.

Its subcellular location is the membrane. It catalyses the reaction adenosine(in) + H(+)(in) = adenosine(out) + H(+)(out). The enzyme catalyses uridine(in) + H(+)(in) = uridine(out) + H(+)(out). Its function is as follows. Sodium-independent nucleoside:H(+) symporter; transports adenosine with high affinity and uridine with moderate affinity. Can transport cytidine and thymidine. This Leishmania donovani protein is Nucleoside transporter 1.2.